Consider the following 116-residue polypeptide: Transmembrane protein 213 (116 aa).

The signal sequence occupies residues 1–35 (MAQSGVFLRNPGHLTSAPQAALLFSLVLTSFHLSC). The Extracellular portion of the chain corresponds to 36–79 (GTETSSSNSTLSAHHPDPGTLEQCANVDFCPLASLCCRASVDEY). A helical membrane pass occupies residues 80–100 (GWIAAAVGWSFWFLTLILLCV). At 101–116 (DKLMKLTPEEPKDLAA) the chain is on the cytoplasmic side.

It is found in the membrane. This chain is Transmembrane protein 213 (Tmem213), found in Mus musculus (Mouse).